The following is a 677-amino-acid chain: MMLSAVLRRTAPAPRLFLGLIKSPSLQSRGGAYNRSVITGDRGEPQRLRTAAWVRPGASSVLFPGRGAATGGRRGERTEIPYLTAASSGRGPSPEETLPGQDSWNGVPNKAGLGMWALAMALVVQCYNKNPSNKDAALMEAARANNVQEVRRLLSEGADVNARHKLGWTALMVAAISHNESVVQVLLAAGADPNLGDDFSSVYKTANEQGVHSLEVLVTREDDFNNRLNHRASFKGCTALHYAVLADDYSIVKELLGGGANPLQRNEMGHTPLDYAREGEVMKLLKTSETKYMEKQRKREAEERRRFPLEQRLEQHIIGQESAIATVGAAIRRKENGWYDEEHPLVFLFLGSSGIGKTELAKQTAKYMHKDAKKGFIRLDMSEFQERHEVAKFIGSPPGYIGHEEGGQLTKKLKQCPNAVVLFDEVDKAHPDVLTIMLQLFDEGRLTDGKGKTIDCKDAIFIMTSNVASDEIAQHALQLRQEALEMSRNRIAENLGDVQISDKITISKNFKENMIRPILKAHFRRDEFLGRINEIVYFLPFCHSELIQLVNKELNFWAKRAKQRHNITLLWDREVADVLVDGYNVQYGARSIKHEVERRVVNQLAAAYEQDLLPGGCTLRITVEDSDKQLLKSPELPSPQAEKRPPTLRLEIIDKDSKTHKLDIQAPLHPEKVCYTI.

A mitochondrion-targeting transit peptide spans 1–57 (MMLSAVLRRTAPAPRLFLGLIKSPSLQSRGGAYNRSVITGDRGEPQRLRTAAWVRPG). The disordered stretch occupies residues 64–103 (PGRGAATGGRRGERTEIPYLTAASSGRGPSPEETLPGQDS). The segment at 92–126 (PSPEETLPGQDSWNGVPNKAGLGMWALAMALVVQC) is autoinhibitory. 4 ANK repeats span residues 133–162 (NKDA…DVNA), 166–195 (LGWT…DPNL), 235–265 (KGCT…PLQR), and 268–297 (MGHT…EKQR). ATP contacts are provided by His-316, Ile-318, Ser-353, Gly-354, Ile-355, Gly-356, Lys-357, Thr-358, Glu-425, and Asn-466. The segment at 477–505 (LQLRQEALEMSRNRIAENLGDVQISDKIT) is regulatory; slows ATPase and disaggregase activities. Residue Arg-531 participates in ATP binding. Position 559 is an N6-acetyllysine (Lys-559). Arg-590 is an ATP binding site.

The protein belongs to the ClpA/ClpB family. In terms of assembly, homododecamer when substrate-bound; the homododecamer consists of 2 homohexamers stacked head-to-head via ANK repeat-mediated interactions. The active substrate-bound form is likely to exist in a dynamic equilibrium between homohexamers and homododecamers. Homotetradecamer in the unbound state which is remodeled upon substrate binding into the homododecamer. Interacts with PHB and PHB2. Interacts with MAVS; the interaction is enhanced by Sendai virus infection. Post-translationally, proteolytically cleaved by protease PARL. ATP-dependent protein disaggregase activity is stimulated by PARL-mediated cleavage of the N-terminal autoinhibitory peptide.

The protein resides in the mitochondrion intermembrane space. The enzyme catalyses ATP + H2O = ADP + phosphate + H(+). With respect to regulation, disaggregase activity is inhibited by ADP. Its function is as follows. Functions as a regulatory ATPase and participates in secretion/protein trafficking process. Has ATP-dependent protein disaggregase activity and is required to maintain the solubility of key mitochondrial proteins. Involved in mitochondrial-mediated antiviral innate immunity, activates RIG-I-mediated signal transduction and production of IFNB1 and pro-inflammatory cytokine IL6. Plays a role in granulocyte differentiation. This is Mitochondrial disaggregase from Rattus norvegicus (Rat).